A 342-amino-acid chain; its full sequence is Ketol-acid reductoisomerase (NADP(+)) (342 aa).

Positions 2 to 182 (AEMFYDDDAD…GGLRAGGIKT (181 aa)) constitute a KARI N-terminal Rossmann domain. NADP(+)-binding positions include 25-28 (FGSQ), Lys48, Ser51, Ser53, and 83-86 (DHLQ). The active site involves His108. Gly134 contacts NADP(+). Positions 183–328 (TFTEETETDL…RELRKLMAWV (146 aa)) constitute a KARI C-terminal knotted domain. The Mg(2+) site is built by Asp191, Glu195, Glu227, and Glu231. Ser252 provides a ligand contact to substrate.

It belongs to the ketol-acid reductoisomerase family. The cofactor is Mg(2+).

It catalyses the reaction (2R)-2,3-dihydroxy-3-methylbutanoate + NADP(+) = (2S)-2-acetolactate + NADPH + H(+). It carries out the reaction (2R,3R)-2,3-dihydroxy-3-methylpentanoate + NADP(+) = (S)-2-ethyl-2-hydroxy-3-oxobutanoate + NADPH + H(+). Its pathway is amino-acid biosynthesis; L-isoleucine biosynthesis; L-isoleucine from 2-oxobutanoate: step 2/4. It participates in amino-acid biosynthesis; L-valine biosynthesis; L-valine from pyruvate: step 2/4. Functionally, involved in the biosynthesis of branched-chain amino acids (BCAA). Catalyzes an alkyl-migration followed by a ketol-acid reduction of (S)-2-acetolactate (S2AL) to yield (R)-2,3-dihydroxy-isovalerate. In the isomerase reaction, S2AL is rearranged via a Mg-dependent methyl migration to produce 3-hydroxy-3-methyl-2-ketobutyrate (HMKB). In the reductase reaction, this 2-ketoacid undergoes a metal-dependent reduction by NADPH to yield (R)-2,3-dihydroxy-isovalerate. The sequence is that of Ketol-acid reductoisomerase (NADP(+)) from Kineococcus radiotolerans (strain ATCC BAA-149 / DSM 14245 / SRS30216).